Here is an 813-residue protein sequence, read N- to C-terminus: Disintegrin and metalloproteinase domain-containing protein 33 (813 aa).

An N-terminal signal peptide occupies residues 1 to 29 (MGWRPRRARGTPLLLLLLLLLLWPVPGAG). The propeptide occupies 30 to 203 (VLQGHIPGQP…PGGPQSRGRR (174 aa)). The Extracellular portion of the chain corresponds to 30 to 701 (VLQGHIPGQP…GPVQAENHDT (672 aa)). N109 carries an N-linked (GlcNAc...) asparagine glycan. Positions 131-138 (CTCSGMSG) match the Cysteine switch motif. Zn(2+) is bound at residue C133. An N-linked (GlcNAc...) asparagine glycan is attached at N145. The interval 184–205 (PGNKAGMTSLPGGPQSRGRREA) is disordered. In terms of domain architecture, Peptidase M12B spans 210 to 409 (KYLELYIVAD…GGGACLSNAP (200 aa)). N-linked (GlcNAc...) asparagine glycans are attached at residues N231 and N276. 3 cysteine pairs are disulfide-bonded: C320–C404, C360–C388, and C361–C371. H345 serves as a coordination point for Zn(2+). Residue E346 is part of the active site. The Zn(2+) site is built by H349 and H355. The Disintegrin domain maps to 417 to 503 (PALCGNGFVE…HCPPDVYLLD (87 aa)). A glycan (N-linked (GlcNAc...) asparagine) is linked at N448. 4 cysteine pairs are disulfide-bonded: C475/C495, C653/C663, C657/C669, and C671/C680. The EGF-like domain maps to 649–681 (ELQRCLTACHSHGVCNSNHNCHCAPGWAPPFCD). The chain crosses the membrane as a helical span at residues 702–722 (FLLAMLLSVLLPLLPGAGLAW). At 723–813 (CCYRLPGAHL…QVQMPRSCLW (91 aa)) the chain is on the cytoplasmic side. A disordered region spans residues 746–813 (SGPKDGPHRD…QVQMPRSCLW (68 aa)). Residues 780-791 (ENSHEPSSHPEK) show a composition bias toward basic and acidic residues.

The cofactor is Zn(2+). The precursor is cleaved by a furin endopeptidase. As to expression, expressed in all tissues, except liver, with high expression in placenta, lung, spleen and veins.

It is found in the membrane. In Homo sapiens (Human), this protein is Disintegrin and metalloproteinase domain-containing protein 33 (ADAM33).